The chain runs to 540 residues: GMP synthase [glutamine-hydrolyzing] (540 aa).

A Glutamine amidotransferase type-1 domain is found at 26-216; the sequence is IIIILDFGSQ…VYHICECEPT (191 aa). The Nucleophile role is filled by C103. Active-site residues include H190 and E192. Positions 217–415 constitute a GMPS ATP-PPase domain; it reads WTTAAFVEEA…VGLPEEIVQR (199 aa). 244–250 is an ATP binding site; that stretch reads SGGVDSS.

As to quaternary structure, homodimer.

It catalyses the reaction XMP + L-glutamine + ATP + H2O = GMP + L-glutamate + AMP + diphosphate + 2 H(+). Its pathway is purine metabolism; GMP biosynthesis; GMP from XMP (L-Gln route): step 1/1. Catalyzes the synthesis of GMP from XMP. The protein is GMP synthase [glutamine-hydrolyzing] of Trichormus variabilis (strain ATCC 29413 / PCC 7937) (Anabaena variabilis).